The chain runs to 100 residues: Large ribosomal subunit protein bL28 (100 aa).

It belongs to the bacterial ribosomal protein bL28 family.

This chain is Large ribosomal subunit protein bL28, found in Gluconobacter oxydans (strain 621H) (Gluconobacter suboxydans).